We begin with the raw amino-acid sequence, 305 residues long: Elongation factor Ts (305 aa).

The interval 79–82 (TDFV) is involved in Mg(2+) ion dislocation from EF-Tu.

This sequence belongs to the EF-Ts family.

The protein resides in the cytoplasm. Associates with the EF-Tu.GDP complex and induces the exchange of GDP to GTP. It remains bound to the aminoacyl-tRNA.EF-Tu.GTP complex up to the GTP hydrolysis stage on the ribosome. The sequence is that of Elongation factor Ts from Brucella anthropi (strain ATCC 49188 / DSM 6882 / CCUG 24695 / JCM 21032 / LMG 3331 / NBRC 15819 / NCTC 12168 / Alc 37) (Ochrobactrum anthropi).